A 339-amino-acid chain; its full sequence is Putative clathrin assembly protein At1g14686 (339 aa).

Residues 16 to 148 form the ENTH domain; that stretch reads SLIAADDILT…ILFHDGNRHR (133 aa). Residues 283–307 are disordered; the sequence is ESSEESAERTEIAEEEEEEEEEIET. The segment covering 295 to 305 has biased composition (acidic residues); sequence AEEEEEEEEEI.

The protein localises to the membrane. It is found in the clathrin-coated pit. The protein resides in the golgi apparatus. Its subcellular location is the cytoplasmic vesicle. It localises to the clathrin-coated vesicle. This Arabidopsis thaliana (Mouse-ear cress) protein is Putative clathrin assembly protein At1g14686.